Consider the following 66-residue polypeptide: Toxin BomPI (66 aa).

An LCN-type CS-alpha/beta domain is found at 2-64; sequence RDAYIAQPEN…VPIRIEGKCH (63 aa). Intrachain disulfides connect C12–C63, C16–C36, C22–C46, and C26–C48.

The protein belongs to the long (4 C-C) scorpion toxin superfamily. Sodium channel inhibitor family. Alpha subfamily. In terms of tissue distribution, expressed by the venom gland.

The protein resides in the secreted. In terms of biological role, alpha toxins bind voltage-independently at site-3 of sodium channels (Nav) and inhibit the inactivation of the activated channels, thereby blocking neuronal transmission. The protein is Toxin BomPI of Buthus occitanus mardochei (Moroccan scorpion).